Here is a 226-residue protein sequence, read N- to C-terminus: MNLIDQIKNTLIISCQAVDDEPLNDSYVLSKMCYALVLGGAKVLRLSQVEHIKKIKEVVNVPIIGLIKKHYDNSEVFITPTIKEVDQLVDLKVDIIALDATLRKRPDQDLTNLIKTIKTKYPNQLLMADCSNINDAINAQNLGFDLISTTLRGYTKDTLNHNNIENDYQFLKDLKKVITKPIIAEGGIWTPQQAKEILNLGIHSIVVGSAITRLHLIVKYWNDNLK.

It belongs to the NanE family.

It carries out the reaction an N-acyl-D-glucosamine 6-phosphate = an N-acyl-D-mannosamine 6-phosphate. It functions in the pathway amino-sugar metabolism; N-acetylneuraminate degradation; D-fructose 6-phosphate from N-acetylneuraminate: step 3/5. In terms of biological role, converts N-acetylmannosamine-6-phosphate (ManNAc-6-P) to N-acetylglucosamine-6-phosphate (GlcNAc-6-P). The sequence is that of Putative N-acetylmannosamine-6-phosphate 2-epimerase from Mycoplasma mycoides subsp. mycoides SC (strain CCUG 32753 / NCTC 10114 / PG1).